The sequence spans 129 residues: Small ribosomal subunit protein uS11 (129 aa).

It belongs to the universal ribosomal protein uS11 family. In terms of assembly, part of the 30S ribosomal subunit. Interacts with proteins S7 and S18. Binds to IF-3.

Its function is as follows. Located on the platform of the 30S subunit, it bridges several disparate RNA helices of the 16S rRNA. Forms part of the Shine-Dalgarno cleft in the 70S ribosome. In Thermosipho africanus (strain TCF52B), this protein is Small ribosomal subunit protein uS11.